The primary structure comprises 101 residues: Large ribosomal subunit protein uL23 (101 aa).

It belongs to the universal ribosomal protein uL23 family. As to quaternary structure, part of the 50S ribosomal subunit. Contacts protein L29, and trigger factor when it is bound to the ribosome.

Its function is as follows. One of the early assembly proteins it binds 23S rRNA. One of the proteins that surrounds the polypeptide exit tunnel on the outside of the ribosome. Forms the main docking site for trigger factor binding to the ribosome. The sequence is that of Large ribosomal subunit protein uL23 from Leptospira biflexa serovar Patoc (strain Patoc 1 / Ames).